Reading from the N-terminus, the 469-residue chain is Sulfate adenylyltransferase subunit 1 (469 aa).

The region spanning 22 to 236 is the tr-type G domain; it reads KDMLRFLTCG…TLENIEIGND (215 aa). The tract at residues 31-38 is G1; sequence GSVDDGKS. GTP is bound at residue 31–38; that stretch reads GSVDDGKS. Positions 89 to 93 are G2; sequence GITID. Residues 110 to 113 are G3; sequence DTPG. GTP-binding positions include 110-114 and 165-168; these read DTPGH and NKMD. The segment at 165–168 is G4; it reads NKMD. Residues 202–204 are G5; sequence SAL.

The protein belongs to the TRAFAC class translation factor GTPase superfamily. Classic translation factor GTPase family. CysN/NodQ subfamily. As to quaternary structure, heterodimer composed of CysD, the smaller subunit, and CysN.

The catalysed reaction is sulfate + ATP + H(+) = adenosine 5'-phosphosulfate + diphosphate. The protein operates within sulfur metabolism; hydrogen sulfide biosynthesis; sulfite from sulfate: step 1/3. With CysD forms the ATP sulfurylase (ATPS) that catalyzes the adenylation of sulfate producing adenosine 5'-phosphosulfate (APS) and diphosphate, the first enzymatic step in sulfur assimilation pathway. APS synthesis involves the formation of a high-energy phosphoric-sulfuric acid anhydride bond driven by GTP hydrolysis by CysN coupled to ATP hydrolysis by CysD. This is Sulfate adenylyltransferase subunit 1 from Pseudoalteromonas atlantica (strain T6c / ATCC BAA-1087).